Consider the following 334-residue polypeptide: Uroporphyrinogen decarboxylase (334 aa).

Residues 22 to 26 (RQVGR), D71, Y140, S195, and H310 contribute to the substrate site.

Belongs to the uroporphyrinogen decarboxylase family. Homodimer.

It localises to the cytoplasm. It catalyses the reaction uroporphyrinogen III + 4 H(+) = coproporphyrinogen III + 4 CO2. It participates in porphyrin-containing compound metabolism; protoporphyrin-IX biosynthesis; coproporphyrinogen-III from 5-aminolevulinate: step 4/4. Its function is as follows. Catalyzes the decarboxylation of four acetate groups of uroporphyrinogen-III to yield coproporphyrinogen-III. In Chlamydia muridarum (strain MoPn / Nigg), this protein is Uroporphyrinogen decarboxylase.